We begin with the raw amino-acid sequence, 38 residues long: Spheniscin-2 (38 aa).

3 disulfide bridges follow: cysteine 5-cysteine 33, cysteine 12-cysteine 27, and cysteine 17-cysteine 34.

As to quaternary structure, monomer. In terms of tissue distribution, secreted into the stomach cavity.

The protein localises to the secreted. Functionally, has antifungal activity and antibacterial activity against Gram-positive and Gram-negative bacteria. Involved in the process of food preservation in the stomach during the incubation fast. May also be present during infection. In Aptenodytes patagonicus (King penguin), this protein is Spheniscin-2.